A 240-amino-acid chain; its full sequence is tRNA pseudouridine synthase A (240 aa).

Residue aspartate 50 is the Nucleophile of the active site. Tyrosine 109 is a binding site for substrate.

Belongs to the tRNA pseudouridine synthase TruA family. Homodimer.

It carries out the reaction uridine(38/39/40) in tRNA = pseudouridine(38/39/40) in tRNA. In terms of biological role, formation of pseudouridine at positions 38, 39 and 40 in the anticodon stem and loop of transfer RNAs. This Campylobacter jejuni subsp. jejuni serotype O:6 (strain 81116 / NCTC 11828) protein is tRNA pseudouridine synthase A.